The primary structure comprises 399 residues: Probable 2-isopropylmalate synthase (399 aa).

The region spanning 20 to 272 is the Pyruvate carboxyltransferase domain; it reads VRIFDTTLRD…RTGVNTKLLY (253 aa). Positions 29, 210, 212, and 246 each coordinate a divalent metal cation.

The protein belongs to the alpha-IPM synthase/homocitrate synthase family. Homodimer. Requires a divalent metal cation as cofactor.

It catalyses the reaction 3-methyl-2-oxobutanoate + acetyl-CoA + H2O = (2S)-2-isopropylmalate + CoA + H(+). It participates in amino-acid biosynthesis; L-leucine biosynthesis; L-leucine from 3-methyl-2-oxobutanoate: step 1/4. Its function is as follows. Catalyzes the condensation of the acetyl group of acetyl-CoA with 3-methyl-2-oxobutanoate (2-oxoisovalerate) to form 3-carboxy-3-hydroxy-4-methylpentanoate (2-isopropylmalate). The sequence is that of Probable 2-isopropylmalate synthase (leuA) from Ignicoccus hospitalis (strain KIN4/I / DSM 18386 / JCM 14125).